The chain runs to 899 residues: Androgen receptor (899 aa).

The interval methionine 1–lysine 537 is modulating. Residues methionine 1 to alanine 566 are interaction with ZNF318. Disordered regions lie at residues glutamine 35–leucine 146 and glutamine 175–asparagine 222. The residue at position 61 (serine 61) is a Phosphoserine; by CDK9. Phosphoserine is present on serine 75. 2 stretches are compositionally biased toward low complexity: residues glutamine 94–glutamate 103 and glutamine 175–glutamine 193. Residues alanine 210–asparagine 222 show a composition bias toward polar residues. Tyrosine 218 carries the post-translational modification Phosphotyrosine; by CSK. Phosphoserine is present on serine 251. Position 262 is a phosphotyrosine; by CSK and TNK2 (tyrosine 262). 4 positions are modified to phosphotyrosine; by CSK: tyrosine 302, tyrosine 341, tyrosine 352, and tyrosine 357. Tyrosine 358 is subject to Phosphotyrosine; by CSK and TNK2. Lysine 381 is covalently cross-linked (Glycyl lysine isopeptide (Lys-Gly) (interchain with G-Cter in SUMO)). Position 388 is a phosphotyrosine; by CSK (tyrosine 388). Positions glutamate 436 to serine 471 are disordered. Residue lysine 500 forms a Glycyl lysine isopeptide (Lys-Gly) (interchain with G-Cter in SUMO) linkage. A phosphotyrosine; by CSK mark is found at tyrosine 514 and tyrosine 531. Residues tyrosine 531–threonine 898 form an interaction with LPXN region. The segment at residues threonine 538 to leucine 611 is a DNA-binding region (nuclear receptor). 2 NR C4-type zinc fingers span residues cysteine 539–cysteine 559 and cysteine 575–cysteine 599. Positions tyrosine 551 to valine 641 are interaction with HIPK3. Residues glutamine 571–threonine 898 are interaction with CCAR1. Positions methionine 604–threonine 898 are interaction with KAT7. Position 630 is a phosphoserine (serine 630). The NR LBD domain occupies glutamate 648 to isoleucine 879. Residues asparagine 685 and arginine 732 each coordinate 17beta-hydroxy-5alpha-androstan-3-one. Residues lysine 825 and lysine 827 each participate in a glycyl lysine isopeptide (Lys-Gly) (interchain with G-Cter in ubiquitin) cross-link. Residue threonine 857 coordinates 17beta-hydroxy-5alpha-androstan-3-one. Tyrosine 895 is subject to Phosphotyrosine; by CSK.

It belongs to the nuclear hormone receptor family. NR3 subfamily. In terms of assembly, binds DNA as a homodimer. Part of a ternary complex containing AR, EFCAB6/DJBP and PARK7. Interacts with HIPK3 and NR0B2 in the presence of androgen. The ligand binding domain interacts with KAT7/HBO1 in the presence of dihydrotestosterone. Interacts with EFCAB6/DJBP, PQBP1, RANBP9, SPDEF, SRA1, TGFB1I1, ZNF318 and RREB1. The AR N-terminal poly-Gln region binds Ran resulting in enhancement of AR-mediated transactivation. Ran-binding decreases as the poly-Gln length increases. Interacts with ZMIZ1/ZIMP10 and ZMIZ2/ZMIP7 which both enhance its transactivation activity. Interacts with RBAK. Interacts via the ligand-binding domain with LXXLL and FXXLF motifs from NCOA1, NCOA2, NCOA3 and MAGEA11. Interacts (via nuclear receptor DNA binding domain and nuclear receptor ligand binding domain) with NCOA4. Interacts with HIP1 (via coiled coil domain). Interacts with SLC30A9 and RAD54L2/ARIP4. Interacts with MACROD1 (via macro domain). Interacts (via ligand-binding domain) with TRIM68. Interacts with TNK2. Interacts with USP26. Interacts with RNF6. Interacts (regulated by RNF6 probably through polyubiquitination) with RNF14; regulates AR transcriptional activity. Interacts with PRMT2 and TRIM24. Interacts with RACK1. Interacts with RANBP10; this interaction enhances hormone-induced AR transcriptional activity. Interacts with PRPF6 in a hormone-independent way; this interaction enhances hormone-induced AR transcriptional activity. Interacts with STK4/MST1. Interacts with ZIPK/DAPK3. Interacts with LPXN. Interacts with MAK. Part of a complex containing AR, MAK and NCOA3. Interacts with CRY1. Interacts with CCAR1 and GATA2. Interacts with BUD31. Interacts with ARID4A. Interacts with ARID4B. Interacts (via NR LBD domain) with ZBTB7A; the interaction is direct and androgen-dependent. Interacts with NCOR1. Interacts with NCOR2. Interacts with CRY2 in a ligand-dependent manner. Phosphorylated in prostate cancer cells in response to several growth factors including EGF. Phosphorylation is induced by c-Src kinase (CSK). Tyr-514 is one of the major phosphorylation sites and an increase in phosphorylation and Src kinase activity is associated with prostate cancer progression. Phosphorylation by TNK2 enhances the DNA-binding and transcriptional activity. Phosphorylation at Ser-61 by CDK9 regulates AR promoter selectivity and cell growth. Phosphorylation by PAK6 leads to AR-mediated transcription inhibition. In terms of processing, sumoylated on Lys-381 (major) and Lys-500. Ubiquitinated. Deubiquitinated by USP26. 'Lys-6' and 'Lys-27'-linked polyubiquitination by RNF6 modulates AR transcriptional activity and specificity. Post-translationally, palmitoylated by ZDHHC7 and ZDHHC21. Palmitoylation is required for plasma membrane targeting and for rapid intracellular signaling via ERK and AKT kinases and cAMP generation.

The protein localises to the nucleus. It localises to the cytoplasm. Functionally, steroid hormone receptors are ligand-activated transcription factors that regulate eukaryotic gene expression and affect cellular proliferation and differentiation in target tissues. Transcription factor activity is modulated by bound coactivator and corepressor proteins like ZBTB7A that recruits NCOR1 and NCOR2 to the androgen response elements/ARE on target genes, negatively regulating androgen receptor signaling and androgen-induced cell proliferation. Transcription activation is also down-regulated by NR0B2. Activated, but not phosphorylated, by HIPK3 and ZIPK/DAPK3. This Mus musculus (Mouse) protein is Androgen receptor (Ar).